Here is an 876-residue protein sequence, read N- to C-terminus: DNA double-strand break repair Rad50 ATPase (876 aa).

Residues Arg-11, 31–37 (NGAGKTT), and Gln-139 contribute to the ATP site. 2 coiled-coil regions span residues 188–528 (RERV…EDRL) and 575–710 (SGVE…RKER). In terms of domain architecture, Zinc-hook spans 387–484 (EETLQSEYEE…RLESVRRELE (98 aa)). Zn(2+)-binding residues include Cys-432 and Cys-435.

The protein belongs to the SMC family. RAD50 subfamily. In terms of assembly, homodimer. Forms a heterotetramer composed of two Mre11 subunits and two Rad50 subunits. The cofactor is Zn(2+).

Its function is as follows. Part of the Rad50/Mre11 complex, which is involved in the early steps of DNA double-strand break (DSB) repair. The complex may facilitate opening of the processed DNA ends to aid in the recruitment of HerA and NurA. Rad50 controls the balance between DNA end bridging and DNA resection via ATP-dependent structural rearrangements of the Rad50/Mre11 complex. The sequence is that of DNA double-strand break repair Rad50 ATPase from Methanopyrus kandleri (strain AV19 / DSM 6324 / JCM 9639 / NBRC 100938).